A 501-amino-acid chain; its full sequence is Ribonuclease Y (501 aa).

A helical membrane pass occupies residues 7 to 27 (LVVIALLGALTLLTAGHVLAL). The 67-residue stretch at 190–256 (VVRAVPLPEE…RLTLEKLVAD (67 aa)) folds into the KH domain. An HD domain is found at 316–409 (VLAHLVESAH…TQAADAISGG (94 aa)).

Belongs to the RNase Y family.

Its subcellular location is the cell membrane. Functionally, endoribonuclease that initiates mRNA decay. This chain is Ribonuclease Y, found in Thermobifida fusca (strain YX).